The following is a 318-amino-acid chain: Olfactory receptor 56A1 (318 aa).

Over 1-32 (MIQPMASPSNSSTVPVSEFLLICFPNFQSWQH) the chain is Extracellular. A glycan (N-linked (GlcNAc...) asparagine) is linked at Asn10. Residues 33 to 53 (WLSLPLSLLFLLAMGANTTLL) form a helical membrane-spanning segment. The Cytoplasmic portion of the chain corresponds to 54 to 61 (ITIQLEAS). A helical transmembrane segment spans residues 62-82 (LHQPLYYLLSLLSLLDIVLCL). At 83-106 (TVIPKVLAIFWYDLRSISFPACFL) the chain is on the extracellular side. Cys104 and Cys196 are oxidised to a cystine. Residues 107–127 (QMFIMNSFLPMESCTFMVMAY) traverse the membrane as a helical segment. The Cytoplasmic portion of the chain corresponds to 128 to 146 (DRYVAICHPLRYPSIITNQ). Residues 147-167 (FVAKASVFIVVRNALLTAPIP) form a helical membrane-spanning segment. Topologically, residues 168–203 (ILTSLLHYCGENVIENCICANLSVSRLSCDNFTLNR) are extracellular. N-linked (GlcNAc...) asparagine glycans are attached at residues Asn188 and Asn198. Residues 204–224 (IYQFVAGWTLLGSDLFLIFLS) form a helical membrane-spanning segment. At 225 to 244 (YTFILRAVLRFKAEGAAVKA) the chain is on the cytoplasmic side. Residues 245-265 (LSTCGSHFILILFFSTILLVV) form a helical membrane-spanning segment. At 266–280 (VLTNVARKKVPMDIL) the chain is on the extracellular side. A helical membrane pass occupies residues 281–301 (ILLNVLHHLIPPALNPIVYGV). The Cytoplasmic segment spans residues 302 to 318 (RTKEIKQGIQKLLQRGR).

The protein belongs to the G-protein coupled receptor 1 family.

Its subcellular location is the cell membrane. Odorant receptor. This chain is Olfactory receptor 56A1 (OR56A1), found in Homo sapiens (Human).